The primary structure comprises 371 residues: Aldose sugar dehydrogenase YliI (371 aa).

A signal peptide spans 1–20 (MHRQSFFLVPLICLSSALWA). Residue Gln-82 coordinates pyrroloquinoline quinone. Residue His-147 is the Proton acceptor of the active site. Positions 214-215 (RN) are PQQ. 2 residues coordinate Ca(2+): Glu-240 and Tyr-250. Tyr-261 provides a ligand contact to pyrroloquinoline quinone. PQQ regions lie at residues 312 to 314 (ALK) and 341 to 343 (RIR).

It belongs to the PQQ oxidoreductase GdhB family. Monomer. Ca(2+) is required as a cofactor. The cofactor is pyrroloquinoline quinone.

The protein resides in the cell outer membrane. In terms of biological role, aldose sugar dehydrogenase with broad substrate specificity. The physiological substrate is unknown. Can oxidize glucose to gluconolactone. Can also utilize D-arabinose, L-arabinose and 2-deoxy-glucose. Has higher activity towards oligomeric sugars, such as maltose, maltotriose or cellobiose. It may function to input sugar-derived electrons into the respiratory network. The chain is Aldose sugar dehydrogenase YliI (yliI) from Escherichia coli (strain K12).